Consider the following 557-residue polypeptide: 2-succinyl-5-enolpyruvyl-6-hydroxy-3-cyclohexene-1-carboxylate synthase (557 aa).

The protein belongs to the TPP enzyme family. MenD subfamily. As to quaternary structure, homodimer. Requires Mg(2+) as cofactor. The cofactor is Mn(2+). Thiamine diphosphate is required as a cofactor.

It catalyses the reaction isochorismate + 2-oxoglutarate + H(+) = 5-enolpyruvoyl-6-hydroxy-2-succinyl-cyclohex-3-ene-1-carboxylate + CO2. It functions in the pathway quinol/quinone metabolism; 1,4-dihydroxy-2-naphthoate biosynthesis; 1,4-dihydroxy-2-naphthoate from chorismate: step 2/7. Its pathway is quinol/quinone metabolism; menaquinone biosynthesis. Catalyzes the thiamine diphosphate-dependent decarboxylation of 2-oxoglutarate and the subsequent addition of the resulting succinic semialdehyde-thiamine pyrophosphate anion to isochorismate to yield 2-succinyl-5-enolpyruvyl-6-hydroxy-3-cyclohexene-1-carboxylate (SEPHCHC). The chain is 2-succinyl-5-enolpyruvyl-6-hydroxy-3-cyclohexene-1-carboxylate synthase from Staphylococcus aureus (strain MSSA476).